The sequence spans 748 residues: CCR4-NOT transcription complex subunit 10-B (748 aa).

Over residues 1–16 (MAADKAGEQGAEKHEG) the composition is skewed to basic and acidic residues. Disordered regions lie at residues 1 to 25 (MAADKAGEQGAEKHEGSANCSGISD), 483 to 524 (KQEN…PPSS), and 605 to 634 (VSLGVSSNEQEQGSDKGENEPMESAGKQIP). 2 stretches are compositionally biased toward polar residues: residues 487 to 509 (GSKASSQTVNTDSSGESSDVCSN) and 605 to 615 (VSLGVSSNEQE).

This sequence belongs to the CNOT10 family. As to quaternary structure, component of the CCR4-NOT complex. cnot10 and cnot11 form a subcomplex docked to the cnot1 scaffold.

The protein resides in the cytoplasm. The protein localises to the nucleus. In terms of biological role, component of the CCR4-NOT complex which is one of the major cellular mRNA deadenylases and is linked to various cellular processes including bulk mRNA degradation, miRNA-mediated repression, translational repression during translational initiation and general transcription regulation. Additional complex functions may be a consequence of its influence on mRNA expression. Is not required for association of CNOT7 to the CCR4-NOT complex. The polypeptide is CCR4-NOT transcription complex subunit 10-B (cnot10-b) (Xenopus laevis (African clawed frog)).